Here is a 300-residue protein sequence, read N- to C-terminus: Tyrosine recombinase XerC (300 aa).

The region spanning 2-88 (ENVNFTLNLF…SLRSFYKFLL (87 aa)) is the Core-binding (CB) domain. The 186-residue stretch at 109 to 294 (KIPHFLYPDE…TKDHLRYVYL (186 aa)) folds into the Tyr recombinase domain. Catalysis depends on residues R149, K173, H246, R249, and H272. The O-(3'-phospho-DNA)-tyrosine intermediate role is filled by Y281.

The protein belongs to the 'phage' integrase family. XerC subfamily. Forms a cyclic heterotetrameric complex composed of two molecules of XerC and two molecules of XerD.

It localises to the cytoplasm. Site-specific tyrosine recombinase, which acts by catalyzing the cutting and rejoining of the recombining DNA molecules. The XerC-XerD complex is essential to convert dimers of the bacterial chromosome into monomers to permit their segregation at cell division. It also contributes to the segregational stability of plasmids. In Anoxybacillus flavithermus (strain DSM 21510 / WK1), this protein is Tyrosine recombinase XerC.